Reading from the N-terminus, the 904-residue chain is Protein translocase subunit SecA (904 aa).

ATP is bound by residues glutamine 87, 105-109 (GEGKT), and aspartate 512. The segment at 851 to 904 (LAKQQQLSHESDNSALMSQEEANVAASLERKVGRNDPCPCGSGKKYKQCHGRLQ) is disordered. Over residues 853 to 871 (KQQQLSHESDNSALMSQEE) the composition is skewed to polar residues. 4 residues coordinate Zn(2+): cysteine 888, cysteine 890, cysteine 899, and histidine 900. Over residues 894–904 (KKYKQCHGRLQ) the composition is skewed to basic residues.

Belongs to the SecA family. As to quaternary structure, monomer and homodimer. Part of the essential Sec protein translocation apparatus which comprises SecA, SecYEG and auxiliary proteins SecDF-YajC and YidC. Zn(2+) serves as cofactor.

It is found in the cell inner membrane. It localises to the cytoplasm. It carries out the reaction ATP + H2O + cellular proteinSide 1 = ADP + phosphate + cellular proteinSide 2.. Functionally, part of the Sec protein translocase complex. Interacts with the SecYEG preprotein conducting channel. Has a central role in coupling the hydrolysis of ATP to the transfer of proteins into and across the cell membrane, serving both as a receptor for the preprotein-SecB complex and as an ATP-driven molecular motor driving the stepwise translocation of polypeptide chains across the membrane. This Yersinia enterocolitica serotype O:8 / biotype 1B (strain NCTC 13174 / 8081) protein is Protein translocase subunit SecA.